A 62-amino-acid polypeptide reads, in one-letter code: uncharacterized protein (62 aa).

This is an uncharacterized protein from His1 virus (isolate Australia/Victoria) (His1V).